The following is a 424-amino-acid chain: MTAIIDIIGREILDSRGNPTVEVDVHLEDGSFGRAAVPSGASTGAHEAVELRDGGTRYLGKGVERAVDAVNGEIFEAIGGLDAENQIQIDRTMFELDGTPNKSRLGANAILGVSLAVAKAAAEAAGLPLYRYVGGPNAHLLPVPMMNIINGGAHADNPIDFQEFMIMPVGAETLKDAVRMGSEVFHTLKKQLAADGHNTNVGDEGGFAPGLASAPAALDFIMKSIEKAGYRPGEDMYVALDCASTEFFKDGKYVLEGEGRTLEPGAMAEYLAELAGKYPIVSIEDGMAEDDWDGWKALTDLIGNKCQLVGDDLFVTNSARLRDGIKMGVANSILVKVNQIGSLSETLDAVETAHKARYTAVMSHRSGETEDSTIADLAVATNCGQIKTGSLARSDRLAKYNQLIRIEEQLGPQAQYAGRSILRG.

Position 162 (Gln-162) interacts with (2R)-2-phosphoglycerate. Catalysis depends on Glu-204, which acts as the Proton donor. The Mg(2+) site is built by Asp-241, Glu-284, and Asp-311. 4 residues coordinate (2R)-2-phosphoglycerate: Lys-336, Arg-365, Ser-366, and Lys-387. Lys-336 acts as the Proton acceptor in catalysis.

Belongs to the enolase family. Mg(2+) is required as a cofactor.

The protein resides in the cytoplasm. It is found in the secreted. Its subcellular location is the cell surface. It catalyses the reaction (2R)-2-phosphoglycerate = phosphoenolpyruvate + H2O. It functions in the pathway carbohydrate degradation; glycolysis; pyruvate from D-glyceraldehyde 3-phosphate: step 4/5. In terms of biological role, catalyzes the reversible conversion of 2-phosphoglycerate (2-PG) into phosphoenolpyruvate (PEP). It is essential for the degradation of carbohydrates via glycolysis. The protein is Enolase of Sinorhizobium medicae (strain WSM419) (Ensifer medicae).